We begin with the raw amino-acid sequence, 332 residues long: MTKPGNKAERHIPVLLQPVLAGLMPLIGAKVIDGTFGAGGYTRALLNAGAQVIALDRDPHAVREGQSLVDEFFPRLRLMQMEFSQLDRVVEEKVDAVILDIGVSSMQFDEAERGFSFQKDGPLDMRMAQTGFTAGDVVNRLKKDDLARIFKILGEERYAGRIARMIEKRRCVQPFLRTGDLAHAIEALVGRKPGDRIHPATRVFQALRIYVNDEIGELARGLFAAESVLKPGGRLGVVSFHSLEDRMVKRFFSARSGGCRRSRYLPEIEAVPATFFSLFKGAITASKEELQQNPRSRSARLRIGIRTEAECLAKDIKLFDFAEIASFEGSKK.

Residues 39 to 41, Asp-56, Phe-83, Asp-100, and Gln-107 contribute to the S-adenosyl-L-methionine site; that span reads GGY.

It belongs to the methyltransferase superfamily. RsmH family.

The protein localises to the cytoplasm. It catalyses the reaction cytidine(1402) in 16S rRNA + S-adenosyl-L-methionine = N(4)-methylcytidine(1402) in 16S rRNA + S-adenosyl-L-homocysteine + H(+). Specifically methylates the N4 position of cytidine in position 1402 (C1402) of 16S rRNA. The protein is Ribosomal RNA small subunit methyltransferase H of Bartonella quintana (strain Toulouse) (Rochalimaea quintana).